The chain runs to 359 residues: MAIVSSNAEPSKGAPRPKPSRVVDAARQLDDSAELSATKEDGLRPRRLDDYIGQRELKQVLGIAIQAAMGRGEALDHVLLYGPPGLGKTTMAMVLAEELGVTCRITSAPALERPRDIVGLLVNLQPKEVLFIDEIHRLTRVAEELLYPAMEDRRLDLTVGKGSTARTRALELPPFTLVGATTRAGALSSPLRDRFGLIQRLEFYGQEDLQAIVMRAAGLLTLQLSPEACAEIARRCRGTPRIANRLLRRVRDVACVREVSGCIDVKLVDEALTLHRVDGKGLDASDRRLLELLLQSHGGGPVGLDTLAAALGEDPTTLEAVVEPYLLQLGFLQRTPRGRVVTAAGRGHLGWPADEGDAA.

Residues 1–22 form a disordered region; that stretch reads MAIVSSNAEPSKGAPRPKPSRV. The large ATPase domain (RuvB-L) stretch occupies residues 13-204; the sequence is GAPRPKPSRV…FGLIQRLEFY (192 aa). Positions 43, 44, 85, 88, 89, 90, 194, 204, and 241 each coordinate ATP. Mg(2+) is bound at residue Thr89. The tract at residues 205–276 is small ATPAse domain (RuvB-S); it reads GQEDLQAIVM…LVDEALTLHR (72 aa). Residues 279 to 359 are head domain (RuvB-H); sequence GKGLDASDRR…GWPADEGDAA (81 aa). DNA contacts are provided by Arg334 and Arg339.

Belongs to the RuvB family. Homohexamer. Forms an RuvA(8)-RuvB(12)-Holliday junction (HJ) complex. HJ DNA is sandwiched between 2 RuvA tetramers; dsDNA enters through RuvA and exits via RuvB. An RuvB hexamer assembles on each DNA strand where it exits the tetramer. Each RuvB hexamer is contacted by two RuvA subunits (via domain III) on 2 adjacent RuvB subunits; this complex drives branch migration. In the full resolvosome a probable DNA-RuvA(4)-RuvB(12)-RuvC(2) complex forms which resolves the HJ.

It is found in the cytoplasm. The catalysed reaction is ATP + H2O = ADP + phosphate + H(+). Its function is as follows. The RuvA-RuvB-RuvC complex processes Holliday junction (HJ) DNA during genetic recombination and DNA repair, while the RuvA-RuvB complex plays an important role in the rescue of blocked DNA replication forks via replication fork reversal (RFR). RuvA specifically binds to HJ cruciform DNA, conferring on it an open structure. The RuvB hexamer acts as an ATP-dependent pump, pulling dsDNA into and through the RuvAB complex. RuvB forms 2 homohexamers on either side of HJ DNA bound by 1 or 2 RuvA tetramers; 4 subunits per hexamer contact DNA at a time. Coordinated motions by a converter formed by DNA-disengaged RuvB subunits stimulates ATP hydrolysis and nucleotide exchange. Immobilization of the converter enables RuvB to convert the ATP-contained energy into a lever motion, pulling 2 nucleotides of DNA out of the RuvA tetramer per ATP hydrolyzed, thus driving DNA branch migration. The RuvB motors rotate together with the DNA substrate, which together with the progressing nucleotide cycle form the mechanistic basis for DNA recombination by continuous HJ branch migration. Branch migration allows RuvC to scan DNA until it finds its consensus sequence, where it cleaves and resolves cruciform DNA. In Synechococcus sp. (strain CC9311), this protein is Holliday junction branch migration complex subunit RuvB.